Reading from the N-terminus, the 811-residue chain is DNA mismatch repair protein MutS (811 aa).

An ATP-binding site is contributed by 595-602 (GPNMSGKS).

Belongs to the DNA mismatch repair MutS family.

Its function is as follows. This protein is involved in the repair of mismatches in DNA. It is possible that it carries out the mismatch recognition step. This protein has a weak ATPase activity. This Pseudothermotoga lettingae (strain ATCC BAA-301 / DSM 14385 / NBRC 107922 / TMO) (Thermotoga lettingae) protein is DNA mismatch repair protein MutS.